Here is a 338-residue protein sequence, read N- to C-terminus: Ketol-acid reductoisomerase (NADP(+)) (338 aa).

Residues 3–183 (IELLYDADAD…GGARAGVIPT (181 aa)) enclose the KARI N-terminal Rossmann domain. Residues 26–29 (YGSQ), Arg49, Ser52, Ser54, and 84–87 (DTSQ) contribute to the NADP(+) site. His109 is an active-site residue. Gly135 serves as a coordination point for NADP(+). In terms of domain architecture, KARI C-terminal knotted spans 184-329 (TFEAETVTDL…AKLRDLMSWV (146 aa)). Mg(2+) contacts are provided by Asp192, Glu196, Glu228, and Glu232. Ser253 contributes to the substrate binding site.

This sequence belongs to the ketol-acid reductoisomerase family. The cofactor is Mg(2+).

The catalysed reaction is (2R)-2,3-dihydroxy-3-methylbutanoate + NADP(+) = (2S)-2-acetolactate + NADPH + H(+). It catalyses the reaction (2R,3R)-2,3-dihydroxy-3-methylpentanoate + NADP(+) = (S)-2-ethyl-2-hydroxy-3-oxobutanoate + NADPH + H(+). Its pathway is amino-acid biosynthesis; L-isoleucine biosynthesis; L-isoleucine from 2-oxobutanoate: step 2/4. It functions in the pathway amino-acid biosynthesis; L-valine biosynthesis; L-valine from pyruvate: step 2/4. Functionally, involved in the biosynthesis of branched-chain amino acids (BCAA). Catalyzes an alkyl-migration followed by a ketol-acid reduction of (S)-2-acetolactate (S2AL) to yield (R)-2,3-dihydroxy-isovalerate. In the isomerase reaction, S2AL is rearranged via a Mg-dependent methyl migration to produce 3-hydroxy-3-methyl-2-ketobutyrate (HMKB). In the reductase reaction, this 2-ketoacid undergoes a metal-dependent reduction by NADPH to yield (R)-2,3-dihydroxy-isovalerate. This Corynebacterium glutamicum (strain ATCC 13032 / DSM 20300 / JCM 1318 / BCRC 11384 / CCUG 27702 / LMG 3730 / NBRC 12168 / NCIMB 10025 / NRRL B-2784 / 534) protein is Ketol-acid reductoisomerase (NADP(+)).